The following is a 238-amino-acid chain: Peptidyl-tRNA hydrolase (238 aa).

Tyr14 serves as a coordination point for tRNA. His19 serves as the catalytic Proton acceptor. TRNA is bound by residues Tyr64, Asn66, and Asn112. The interval 202 to 225 is disordered; the sequence is PAAQSHIHQARNSAQPKKLPETGP. A compositionally biased stretch (polar residues) spans 207–216; the sequence is HIHQARNSAQ.

Belongs to the PTH family. Monomer.

It is found in the cytoplasm. The enzyme catalyses an N-acyl-L-alpha-aminoacyl-tRNA + H2O = an N-acyl-L-amino acid + a tRNA + H(+). Functionally, hydrolyzes ribosome-free peptidyl-tRNAs (with 1 or more amino acids incorporated), which drop off the ribosome during protein synthesis, or as a result of ribosome stalling. Its function is as follows. Catalyzes the release of premature peptidyl moieties from peptidyl-tRNA molecules trapped in stalled 50S ribosomal subunits, and thus maintains levels of free tRNAs and 50S ribosomes. This chain is Peptidyl-tRNA hydrolase, found in Agrobacterium fabrum (strain C58 / ATCC 33970) (Agrobacterium tumefaciens (strain C58)).